The chain runs to 342 residues: tRNA-specific 2-thiouridylase MnmA (342 aa).

Residues 6–13 (LLSGGVDS) and leucine 32 contribute to the ATP site. Cysteine 92 (nucleophile) is an active-site residue. Residues cysteine 92 and cysteine 191 are joined by a disulfide bond. Glycine 116 is a binding site for ATP. The interval 138–140 (KDQ) is interaction with tRNA. Cysteine 191 serves as the catalytic Cysteine persulfide intermediate. Positions 293 to 294 (RY) are interaction with tRNA.

This sequence belongs to the MnmA/TRMU family.

It is found in the cytoplasm. The enzyme catalyses S-sulfanyl-L-cysteinyl-[protein] + uridine(34) in tRNA + AH2 + ATP = 2-thiouridine(34) in tRNA + L-cysteinyl-[protein] + A + AMP + diphosphate + H(+). In terms of biological role, catalyzes the 2-thiolation of uridine at the wobble position (U34) of tRNA, leading to the formation of s(2)U34. This chain is tRNA-specific 2-thiouridylase MnmA, found in Helicobacter acinonychis (strain Sheeba).